The following is a 273-amino-acid chain: Large ribosomal subunit protein uL2 (273 aa).

Disordered regions lie at residues 28–53 and 221–273; these read KPFA…TTRH and RGTA…RRSK. Residues 39–48 are compositionally biased toward low complexity; the sequence is KSGGRNNNGR. Lysine 242 carries the post-translational modification N6-acetyllysine.

This sequence belongs to the universal ribosomal protein uL2 family. In terms of assembly, part of the 50S ribosomal subunit. Forms a bridge to the 30S subunit in the 70S ribosome.

Its function is as follows. One of the primary rRNA binding proteins. Required for association of the 30S and 50S subunits to form the 70S ribosome, for tRNA binding and peptide bond formation. It has been suggested to have peptidyltransferase activity; this is somewhat controversial. Makes several contacts with the 16S rRNA in the 70S ribosome. The protein is Large ribosomal subunit protein uL2 of Shigella dysenteriae serotype 1 (strain Sd197).